The following is a 257-amino-acid chain: Indole-3-glycerol phosphate synthase (257 aa).

It belongs to the TrpC family.

The catalysed reaction is 1-(2-carboxyphenylamino)-1-deoxy-D-ribulose 5-phosphate + H(+) = (1S,2R)-1-C-(indol-3-yl)glycerol 3-phosphate + CO2 + H2O. It participates in amino-acid biosynthesis; L-tryptophan biosynthesis; L-tryptophan from chorismate: step 4/5. The sequence is that of Indole-3-glycerol phosphate synthase from Phenylobacterium zucineum (strain HLK1).